A 350-amino-acid chain; its full sequence is Proton-activated chloride channel (350 aa).

The tract at residues 1-51 (MEAIRKELSRSYQELNDETDPIARDPEGAQEEEQEEAASAVVPDRDSDRSN) is disordered. The Cytoplasmic segment spans residues 1-63 (MEAIRKELSR…VHFSRTCLKN (63 aa)). The helical transmembrane segment at 64–84 (VFSVLLIFVYLLLMGVAVFLV) threads the bilayer. Topologically, residues 85–297 (YQTITDFRDK…KDPYIQEIQD (213 aa)) are extracellular. A helical transmembrane segment spans residues 298–318 (IITANPWSMIALLCSVFLVLF). The Cytoplasmic segment spans residues 319–350 (KAADFAKLSVKWMIKVRRRHLKKRTRELNHIS).

This sequence belongs to the proton-activated chloride channel family.

It localises to the cell membrane. The catalysed reaction is chloride(in) = chloride(out). Functionally, chloride channel gated by pH that facilitates the entry of chloride ions into cells upon exposure to extracellular acidic pH. The protein is Proton-activated chloride channel of Xenopus laevis (African clawed frog).